The following is a 119-amino-acid chain: Large ribosomal subunit protein uL18 (119 aa).

The protein belongs to the universal ribosomal protein uL18 family. In terms of assembly, part of the 50S ribosomal subunit; part of the 5S rRNA/L5/L18/L25 subcomplex. Contacts the 5S and 23S rRNAs.

Functionally, this is one of the proteins that bind and probably mediate the attachment of the 5S RNA into the large ribosomal subunit, where it forms part of the central protuberance. The polypeptide is Large ribosomal subunit protein uL18 (Cereibacter sphaeroides (strain ATCC 17025 / ATH 2.4.3) (Rhodobacter sphaeroides)).